We begin with the raw amino-acid sequence, 189 residues long: UPF0301 protein PSPA7_0505 (189 aa).

The protein belongs to the UPF0301 (AlgH) family.

In Pseudomonas paraeruginosa (strain DSM 24068 / PA7) (Pseudomonas aeruginosa (strain PA7)), this protein is UPF0301 protein PSPA7_0505.